Consider the following 884-residue polypeptide: MKIHLLLAMIGTFVVIIGAQDQEGFISLDCGLPSDESPYDDSFNGLTFTSDSTFIQTGKIDSVDKDLNINLSKQYLTLRYFPEGKRNCYSLDVKRGTTYLIVVSFVYGNYDGLNRDPNFDIHLGPNKWKRIDLDGEKEGTREEIIHKARSNSLDICLVKTGETLPIISAIEIRPLRNNTYVTQSGSLMMSFRVYLSNSDASIRYADDVHDRIWSPFNGSSHTHITTDLNINNSNAYEIPKNILQTAAIPRNASAPLIITWDPLPINAEVYLYMHFAEIQTLEANETRQFDVILRGNFNHSGFSPTKLKVFTLYTEEPMKCGSEGCYLQLVKTPNSTLPPLINAIEAYSVIEFSQLETSLSDVDAIKNIKNTYKLNKITWQGDPCLPQDLSWESIRCTYVDGSTSPTIISLDLSKSGLNGSIPQILQNFTQLQELDLSNNSLTGPVPIFLANMKTLSLINLSGNNLSGSVPQALLDKEKEGLVLKLEGNPDLCKSSFCNTEKKNKFLLPVIASAASLVIVVVVVALFFVFRKKKASPSNLHAPPSMPVSNPGHNSQSESSFTSKKIRFTYSEVQEMTNNFDKALGEGGFGVVYHGFVNVIEQVAVKLLSQSSSQGYKHFKAEVELLMRVHHINLVSLVGYCDEGEHLALIYEYMPNGDLKQHLSGKHGGFVLSWESRLKIVLDAALGLEYLHTGCVPPMVHRDIKTTNILLDQHLQAKLADFGLSRSFPIGNEKNVSTVVAGTPGYLDPEYYQTNWLTEKSDIYSFGIVLLEIISNRPIIQQSREKPHIVEWVSFMITKGDLRSIMDPNLHQDYDIGSVWKAIELAMSCVSLSSARRPNMSRVVNELKECLISETSRIGEGRDMESKGSMEFSRDIYNEVIPQAR.

A signal peptide spans 1-19; that stretch reads MKIHLLLAMIGTFVVIIGA. Topologically, residues 20-508 are extracellular; the sequence is QDQEGFISLD…TEKKNKFLLP (489 aa). Residues asparagine 70, asparagine 177, asparagine 217, asparagine 231, asparagine 251, asparagine 284, asparagine 298, asparagine 334, asparagine 418, asparagine 427, asparagine 438, asparagine 459, and asparagine 464 are each glycosylated (N-linked (GlcNAc...) asparagine). 3 LRR repeats span residues 404 to 427, 428 to 451, and 452 to 476; these read SPTI…ILQN, FTQL…FLAN, and MKTL…LLDK. The helical transmembrane segment at 509-529 threads the bilayer; it reads VIASAASLVIVVVVVALFFVF. At 530 to 884 the chain is on the cytoplasmic side; that stretch reads RKKKASPSNL…IYNEVIPQAR (355 aa). The disordered stretch occupies residues 535-559; it reads SPSNLHAPPSMPVSNPGHNSQSESS. Residues 546-559 show a composition bias toward polar residues; it reads PVSNPGHNSQSESS. Threonine 568 carries the post-translational modification Phosphothreonine. The 274-residue stretch at 577 to 850 folds into the Protein kinase domain; sequence NNFDKALGEG…RVVNELKECL (274 aa). Residues 583–591 and lysine 605 each bind ATP; that span reads LGEGGFGVV. Tyrosine 650 carries the post-translational modification Phosphotyrosine. Aspartate 702 acts as the Proton acceptor in catalysis. Position 736 is a phosphoserine (serine 736). A phosphothreonine mark is found at threonine 737 and threonine 742. Position 750 is a phosphotyrosine (tyrosine 750).

The protein belongs to the protein kinase superfamily. Ser/Thr protein kinase family. As to quaternary structure, binds to the ammonium transporter AMT1-1.

It localises to the membrane. It carries out the reaction L-seryl-[protein] + ATP = O-phospho-L-seryl-[protein] + ADP + H(+). It catalyses the reaction L-threonyl-[protein] + ATP = O-phospho-L-threonyl-[protein] + ADP + H(+). This Arabidopsis thaliana (Mouse-ear cress) protein is Probable leucine-rich repeat receptor-like protein kinase At2g28990.